Here is a 160-residue protein sequence, read N- to C-terminus: S-ribosylhomocysteine lyase (160 aa).

Fe cation-binding residues include His57, His61, and Cys127.

It belongs to the LuxS family. In terms of assembly, homodimer. The cofactor is Fe cation.

It catalyses the reaction S-(5-deoxy-D-ribos-5-yl)-L-homocysteine = (S)-4,5-dihydroxypentane-2,3-dione + L-homocysteine. Functionally, involved in the synthesis of autoinducer 2 (AI-2) which is secreted by bacteria and is used to communicate both the cell density and the metabolic potential of the environment. The regulation of gene expression in response to changes in cell density is called quorum sensing. Catalyzes the transformation of S-ribosylhomocysteine (RHC) to homocysteine (HC) and 4,5-dihydroxy-2,3-pentadione (DPD). The chain is S-ribosylhomocysteine lyase from Streptococcus uberis (strain ATCC BAA-854 / 0140J).